Here is a 65-residue protein sequence, read N- to C-terminus: uncharacterized protein (65 aa).

This is an uncharacterized protein from Saccharomyces cerevisiae (strain ATCC 204508 / S288c) (Baker's yeast).